Reading from the N-terminus, the 277-residue chain is Caspase-3 (277 aa).

Met-1 carries the N-acetylmethionine modification. 2 propeptides span residues 1 to 9 (MENNETSVD) and 10 to 28 (SKSI…KSMD). An N6-acetyllysine modification is found at Lys-11. Ser-26 carries the post-translational modification Phosphoserine. Catalysis depends on residues His-121 and Cys-163. Position 163 is an S-nitrosocysteine; in inhibited form (Cys-163).

It belongs to the peptidase C14A family. Heterotetramer that consists of two anti-parallel arranged heterodimers, each one formed by a 17 kDa (p17) and a 12 kDa (p12) subunit. Interacts with BIRC6/bruce. Cleavage by granzyme B, caspase-6, caspase-8 and caspase-10 generates the two active subunits. Additional processing of the propeptides is likely due to the autocatalytic activity of the activated protease. Active heterodimers between the small subunit of caspase-7 protease and the large subunit of caspase-3 also occur and vice versa. Post-translationally, S-nitrosylated on its catalytic site cysteine in unstimulated cell lines and denitrosylated upon activation of the Fas apoptotic pathway, associated with an increase in intracellular caspase activity. Fas therefore activates caspase-3 not only by inducing the cleavage of the caspase zymogen to its active subunits, but also by stimulating the denitrosylation of its active site thiol. In terms of processing, ubiquitinated by BIRC6; this activity is inhibited by DIABLO/SMAC.

The protein localises to the cytoplasm. It catalyses the reaction Strict requirement for an Asp residue at positions P1 and P4. It has a preferred cleavage sequence of Asp-Xaa-Xaa-Asp-|- with a hydrophobic amino-acid residue at P2 and a hydrophilic amino-acid residue at P3, although Val or Ala are also accepted at this position.. With respect to regulation, inhibited by BIRC6; following inhibition of BIRC6-caspase binding by DIABLO/SMAC, BIRC6 is subjected to caspase cleavage, leading to an increase in active caspases. Its function is as follows. Involved in the activation cascade of caspases responsible for apoptosis execution. At the onset of apoptosis, it proteolytically cleaves poly(ADP-ribose) polymerase PARP1 at a '216-Asp-|-Gly-217' bond. Cleaves and activates sterol regulatory element binding proteins (SREBPs) between the basic helix-loop-helix leucine zipper domain and the membrane attachment domain. Cleaves and activates caspase-6, -7 and -9 (CASP6, CASP7 and CASP9, respectively). Cleaves and inactivates interleukin-18 (IL18). Triggers cell adhesion in sympathetic neurons through RET cleavage. Cleaves IL-1 beta between an Asp and an Ala, releasing the mature cytokine which is involved in a variety of inflammatory processes. Cleaves and inhibits serine/threonine-protein kinase AKT1 in response to oxidative stress. Acts as an inhibitor of type I interferon production during virus-induced apoptosis by mediating cleavage of antiviral proteins CGAS, IRF3 and MAVS, thereby preventing cytokine overproduction. Also involved in pyroptosis by mediating cleavage and activation of gasdermin-E (GSDME). Cleaves XRCC4 and phospholipid scramblase proteins XKR4, XKR8 and XKR9, leading to promote phosphatidylserine exposure on apoptotic cell surface. Cleaves BIRC6 following inhibition of BIRC6-caspase binding by DIABLO/SMAC. The protein is Caspase-3 (CASP3) of Mesocricetus auratus (Golden hamster).